We begin with the raw amino-acid sequence, 311 residues long: Porphobilinogen deaminase (311 aa).

S-(dipyrrolylmethanemethyl)cysteine is present on Cys-241.

This sequence belongs to the HMBS family. As to quaternary structure, monomer. It depends on dipyrromethane as a cofactor.

It carries out the reaction 4 porphobilinogen + H2O = hydroxymethylbilane + 4 NH4(+). The protein operates within porphyrin-containing compound metabolism; protoporphyrin-IX biosynthesis; coproporphyrinogen-III from 5-aminolevulinate: step 2/4. Its function is as follows. Tetrapolymerization of the monopyrrole PBG into the hydroxymethylbilane pre-uroporphyrinogen in several discrete steps. This chain is Porphobilinogen deaminase, found in Bacillus pumilus (strain SAFR-032).